A 464-amino-acid polypeptide reads, in one-letter code: Argininosuccinate lyase (464 aa).

This sequence belongs to the lyase 1 family. Argininosuccinate lyase subfamily.

The protein localises to the cytoplasm. The enzyme catalyses 2-(N(omega)-L-arginino)succinate = fumarate + L-arginine. It functions in the pathway amino-acid biosynthesis; L-arginine biosynthesis; L-arginine from L-ornithine and carbamoyl phosphate: step 3/3. The polypeptide is Argininosuccinate lyase (Pseudomonas syringae pv. syringae (strain B728a)).